We begin with the raw amino-acid sequence, 567 residues long: Septation ring formation regulator EzrA (567 aa).

Residues 1–2 (ME) lie on the Extracellular side of the membrane. Residues 3 to 21 (FIIGLIVILLALFSVGYFL) form a helical membrane-spanning segment. Residues 22 to 567 (RKNIYKEIDR…AQQEKEYQHQ (546 aa)) are Cytoplasmic-facing. 3 coiled-coil regions span residues 108–185 (IEDL…YEEE), 243–375 (KGYK…RDHV), and 402–529 (KGHL…ERRF).

This sequence belongs to the EzrA family.

It localises to the cell membrane. Functionally, negative regulator of FtsZ ring formation; modulates the frequency and position of FtsZ ring formation. Inhibits FtsZ ring formation at polar sites. Interacts either with FtsZ or with one of its binding partners to promote depolymerization. The protein is Septation ring formation regulator EzrA of Bacillus pumilus (strain SAFR-032).